We begin with the raw amino-acid sequence, 1393 residues long: DNA-directed RNA polymerase subunit beta' (1393 aa).

The Zn(2+) site is built by C72, C74, C87, and C90. Positions 463, 465, and 467 each coordinate Mg(2+). The Zn(2+) site is built by C812, C887, C894, and C897.

This sequence belongs to the RNA polymerase beta' chain family. As to quaternary structure, the RNAP catalytic core consists of 2 alpha, 1 beta, 1 beta' and 1 omega subunit. When a sigma factor is associated with the core the holoenzyme is formed, which can initiate transcription. Mg(2+) serves as cofactor. It depends on Zn(2+) as a cofactor.

The enzyme catalyses RNA(n) + a ribonucleoside 5'-triphosphate = RNA(n+1) + diphosphate. DNA-dependent RNA polymerase catalyzes the transcription of DNA into RNA using the four ribonucleoside triphosphates as substrates. The chain is DNA-directed RNA polymerase subunit beta' from Chlamydia pneumoniae (Chlamydophila pneumoniae).